Reading from the N-terminus, the 1445-residue chain is MAESAKLLFYNKVIDGTAIKQFIGRLVAHFGITYTAHILDQLKTLGFQQATYAATSLGIDDLLTAPSKGWLIQDAEHHSYTLEKHHRYGNVHAVEKLRQLIETWYATSEYLKQEMNPNFRMTDPLNPVHMMSFSGARGSASQVHQLVGMRGLVSDPQGQIIDLPIKSNFREGLSLTEYIISCYGARKGVVDTAVRTSDAGYLTRRLVEVVQHIVVRKTDCNTFRGISLNSTEDKKKNLQIFTQQKLVGRVLADNLYINARCLAIRNQDINTNLIEKLITLKTPLISIRSPLTCKSMLWICQLCYGWSLTHYGDLVELGEAVGIIAGQSIGEPGTQLTLRTFHTGGVFTGDIAEHVRTPFNGTIEFDTDLVYPTRTRHGHPAWVCRTDLAVTIKSQNKIHNLIIPSQSLLLIQNNQYVESKQLIAEVHAKVSPFKEKVQKYIYCNIEGEMHWSKRVRHASKYLHSNVHLIFNTGHLWILSGSSHEDKTSSMFFKNQDQINTKFFISPRKILFMKKTNQVNSKNLDPYLEKEMETLNYSNLYLGILNKSRNFVYPSIILHDYEVKRIYDEKKGENFLLLEERHGEKKTQIFRRFVLNIPKSGILENKDIFAISNDPGYGIQSPGIIKYGTIKVNPIKGKGETFKNRETKILRLRPRYQVIEPGNFFPIPEEVHILYESFPPILVRNDSLIKKNTQITSDIRSQVGGLVRIRRKMNDSYEVKVLPGRVYHPEERRNISKQNDILVPPGEEISNKFQSENWLYLEWITPPKEKPFIFIRPAIEFIVPEETDLAETFTLNSQKKQEILKVKKIRYLLYEDGEEVEVTNKTGIQLIQTGLVLDWKEDSSIKKVYASLTEIETNGLSKKFLQISLIEHPIFEIEKKKNNVNLKYLFTNEINYSSHSFNYENGLFNGYRGIIRISSNENQEDKSLPILSPFDFVQIFLSKNSEEYTPEMKDEGNFNLDTNSIFYAKSFVKKFNQNSITSSQNSSGTFINKEFYNHNNINQEFNSRKIIRNFFLSIERNFMEILLLRKLGLLGNSHSLPSPFQFSCWANTHNQPIINRYSILENLRDVFQVPKWYFFDENKKTHKLDLSKNSIYHLLTWSFSIALSYEEGAIHLVGLGQFICENISISSKYQTISESGQIIAIHPEFLVVRLAKPSLATGGATIHSHYGQIIKKGDVLITLVYERLKSGDIIQGLPKVEQLLEARPINSTSINLENGFENWNRDMTKSLGSLWGFLLSAKTTMNQSQINLVDQIQEVYQSQGVYISDKHIEIVVRQMTSKVLTLEDGMANGFLPGELIESSRAQRMNRVLEESVLYKPILLGITKASLNTQSFISEASFQETTRVLAKAALRGRIDWLKGLKENVIFGGVISAGTGCQEVVWQVILEKRKETYSKRKKNKLFSGRVRDVFSYYQRILFFPTMKIIHKTLKKPLSEINLDPNYRK.

Zn(2+) contacts are provided by Cys220, Cys293, Cys300, and Cys303.

Belongs to the RNA polymerase beta' chain family. RpoC2 subfamily. In plastids the minimal PEP RNA polymerase catalytic core is composed of four subunits: alpha, beta, beta', and beta''. When a (nuclear-encoded) sigma factor is associated with the core the holoenzyme is formed, which can initiate transcription. The cofactor is Zn(2+).

It is found in the plastid. Its subcellular location is the chloroplast. It catalyses the reaction RNA(n) + a ribonucleoside 5'-triphosphate = RNA(n+1) + diphosphate. DNA-dependent RNA polymerase catalyzes the transcription of DNA into RNA using the four ribonucleoside triphosphates as substrates. The chain is DNA-directed RNA polymerase subunit beta'' from Anthoceros angustus (Hornwort).